Reading from the N-terminus, the 953-residue chain is Ubiquitin carboxyl-terminal hydrolase CYLD (953 aa).

The tract at residues 106 to 590 (CEERFSLFKN…FEIMIGKKKG (485 aa)) is interaction with TRIP. CAP-Gly domains follow at residues 153 to 198 (LAER…VFVA) and 253 to 286 (DVLPGKESLGYFVGVDMDNPIGNWDGRFDGVQLC). 2 disordered regions span residues 313–349 (PPKLAFMSRGVGDKGSFSHNKPKATGSTSDPGTRNRS) and 384–410 (SLTEIPPDFGHASPPLQPPSMNSLSSE). A compositionally biased stretch (polar residues) spans 337 to 346 (TGSTSDPGTR). Phosphoserine is present on residues Ser-384, Ser-415, and Ser-419. The interaction with TRAF2 stretch occupies residues 391 to 466 (DFGHASPPLQ…LAVSSGNSHG (76 aa)). Residues 467-681 (LEVGSLAEVK…FTSEEKDPEE (215 aa)) form an interaction with IKBKG/NEMO region. A CAP-Gly 3 domain is found at 489-532 (GQPPGLNEVLAGLELEDECAGCTDGTFRGTRYFTCALKKALFVK). Positions 589-947 (KGIQGHYNSC…DAYMCMYQSP (359 aa)) constitute a USP domain. Cys-598 serves as the catalytic Nucleophile. The segment at 778-830 (LEDTPRQCRICGGLAMYECRECYDDPDISAGKIKQFCKTCNAQVHLHPKRLNH) is B-box. Residues Cys-785, Cys-788, Cys-796, Cys-799, Cys-814, Cys-817, His-822, and His-830 each coordinate Zn(2+). His-868 acts as the Proton acceptor in catalysis.

It belongs to the peptidase C19 family. As to quaternary structure, interacts (via CAP-Gly domain) with IKBKG/NEMO (via proline-rich C-terminal region). Interacts with TRAF2 and TRIP. Interacts with PLK1, DVL1, DVL3, MAVS, TBK1, IKKE and RIGI. Interacts (via CAP-Gly domain) with microtubules. Interacts with HDAC6 and BCL3. Interacts with MAP3K7. Identified in a complex with TRAF6 and SQSTM1. Interacts with OPTN and SQSTM1. Interacts with CEP350. Interacts with RNF31; the interaction is indirect and is mediated via SPATA2. Interacts with SPATA2 (via the PUB domain); the interaction is direct and recruits CYLD to the LUBAC complex, thereby regulating TNF-alpha-induced necroptosis. Phosphorylated on several serine residues by IKKA and/or IKKB in response to immune stimuli. Phosphorylation requires IKBKG. Phosphorylation abolishes TRAF2 deubiquitination, interferes with the activation of Jun kinases, and strongly reduces CD40-dependent gene activation by NF-kappa-B. In terms of processing, ubiquitinated. Polyubiquitinated in hepatocytes treated with palmitic acid. Ubiquitination is mediated by E3 ligase TRIM47 and leads to proteasomal degradation.

Its subcellular location is the cytoplasm. The protein resides in the perinuclear region. The protein localises to the cytoskeleton. It localises to the cell membrane. It is found in the microtubule organizing center. Its subcellular location is the centrosome. The protein resides in the spindle. The protein localises to the cilium basal body. The enzyme catalyses Thiol-dependent hydrolysis of ester, thioester, amide, peptide and isopeptide bonds formed by the C-terminal Gly of ubiquitin (a 76-residue protein attached to proteins as an intracellular targeting signal).. Deubiquitinase that specifically cleaves 'Lys-63'- and linear 'Met-1'-linked polyubiquitin chains and is involved in NF-kappa-B activation and TNF-alpha-induced necroptosis. Negatively regulates NF-kappa-B activation by deubiquitinating upstream signaling factors. Contributes to the regulation of cell survival, proliferation and differentiation via its effects on NF-kappa-B activation. Negative regulator of Wnt signaling. Inhibits HDAC6 and thereby promotes acetylation of alpha-tubulin and stabilization of microtubules. Plays a role in the regulation of microtubule dynamics, and thereby contributes to the regulation of cell proliferation, cell polarization, cell migration, and angiogenesis. Required for normal cell cycle progress and normal cytokinesis. Inhibits nuclear translocation of NF-kappa-B. Plays a role in the regulation of inflammation and the innate immune response, via its effects on NF-kappa-B activation. Dispensable for the maturation of intrathymic natural killer cells, but required for the continued survival of immature natural killer cells. Negatively regulates TNFRSF11A signaling and osteoclastogenesis. Involved in the regulation of ciliogenesis, allowing ciliary basal bodies to migrate and dock to the plasma membrane; this process does not depend on NF-kappa-B activation. Ability to remove linear ('Met-1'-linked) polyubiquitin chains regulates innate immunity and TNF-alpha-induced necroptosis: recruited to the LUBAC complex via interaction with SPATA2 and restricts linear polyubiquitin formation on target proteins. Regulates innate immunity by restricting linear polyubiquitin formation on RIPK2 in response to NOD2 stimulation. Involved in TNF-alpha-induced necroptosis by removing linear ('Met-1'-linked) polyubiquitin chains from RIPK1, thereby regulating the kinase activity of RIPK1. Negatively regulates intestinal inflammation by removing 'Lys-63' linked polyubiquitin chain of NLRP6, thereby reducing the interaction between NLRP6 and PYCARD/ASC and formation of the NLRP6 inflammasome. Does not catalyze deubiquitination of heterotypic 'Lys-63'-/'Lys-48'-linked branched ubiquitin chains. Removes 'Lys-63' linked polyubiquitin chain of MAP3K7, which inhibits phosphorylation and blocks downstream activation of the JNK-p38 kinase cascades. Also removes 'Lys-63'-linked polyubiquitin chains of MAP3K1 and MA3P3K3, which inhibit their interaction with MAP2K1 and MAP2K2. The sequence is that of Ubiquitin carboxyl-terminal hydrolase CYLD (CYLD) from Bos taurus (Bovine).